The primary structure comprises 500 residues: Glucokinase-1 (500 aa).

Serine 2 bears the N-acetylserine mark. Serine 2 carries the phosphoserine modification. Residues 12–498 enclose the Hexokinase domain; sequence RAVIQAVDQI…SGVGAALCAL (487 aa). A hexokinase small subdomain region spans residues 74 to 216; it reads NGTERGVLLA…MPMIKVVALT (143 aa). An ATP-binding site is contributed by lysine 110. Residues 158–184 form a glucose-binding region; it reads KLGFTFSYPVDQTSLNSGTLIRWTKGF. A hexokinase large subdomain region spans residues 217 to 487; it reads NDTVGTYLSH…RKVHLKIAKD (271 aa). Residue serine 470 is modified to Phosphoserine. 487–492 contacts ATP; sequence DGSGVG.

Belongs to the hexokinase family. In terms of assembly, monomer.

The catalysed reaction is D-glucose + ATP = D-glucose 6-phosphate + ADP + H(+). It functions in the pathway carbohydrate metabolism; hexose metabolism. It participates in carbohydrate degradation; glycolysis; D-glyceraldehyde 3-phosphate and glycerone phosphate from D-glucose: step 1/4. Two isoenzymes, hexokinase-1 and hexokinase-2, can phosphorylate keto- and aldohexoses in yeast, whereas a third isoenzyme, GLK, is specific for aldohexoses. All glucose phosphorylating enzymes are involved in glucose uptake. In Saccharomyces cerevisiae (strain ATCC 204508 / S288c) (Baker's yeast), this protein is Glucokinase-1 (GLK1).